The chain runs to 61 residues: Small ribosomal subunit protein uS14B (61 aa).

Zn(2+) is bound by residues Cys24, Cys27, Cys40, and Cys43.

This sequence belongs to the universal ribosomal protein uS14 family. Zinc-binding uS14 subfamily. As to quaternary structure, part of the 30S ribosomal subunit. Contacts proteins S3 and S10. Zn(2+) is required as a cofactor.

Binds 16S rRNA, required for the assembly of 30S particles and may also be responsible for determining the conformation of the 16S rRNA at the A site. This Rhodococcus jostii (strain RHA1) protein is Small ribosomal subunit protein uS14B.